A 186-amino-acid polypeptide reads, in one-letter code: Shikimate kinase (186 aa).

15 to 20 (GAGKTT) lines the ATP pocket. Residue threonine 19 coordinates Mg(2+). Substrate-binding residues include aspartate 37, arginine 61, and glycine 83. Residue arginine 121 coordinates ATP. Residue arginine 140 participates in substrate binding.

It belongs to the shikimate kinase family. Monomer. The cofactor is Mg(2+).

The protein resides in the cytoplasm. The enzyme catalyses shikimate + ATP = 3-phosphoshikimate + ADP + H(+). It functions in the pathway metabolic intermediate biosynthesis; chorismate biosynthesis; chorismate from D-erythrose 4-phosphate and phosphoenolpyruvate: step 5/7. Functionally, catalyzes the specific phosphorylation of the 3-hydroxyl group of shikimic acid using ATP as a cosubstrate. The sequence is that of Shikimate kinase from Psychrobacter arcticus (strain DSM 17307 / VKM B-2377 / 273-4).